We begin with the raw amino-acid sequence, 340 residues long: Sulfotransferase ppzF (340 aa).

It functions in the pathway secondary metabolite biosynthesis. Functionally, sulfotransferase; part of the gene cluster that mediates the biosynthesis of pyrrolopyrazines, secondary metabolites showing insecticidal activity. The role of ppzF within the pathway has still to be determined. The single multifunctional NRPS ppzA is sufficient to produce peramine via condensation of 1-pyrroline-5-carboxylate and arginine, N-methylation of the alpha-amino group of arginine and reduction of the thioester and the cyclization to form an iminium ion resulting in release from the peptide synthetase. Deprotonation of this intermediate and oxidation of the pyrroline ring would give rise to peramine. In Epichloe species that produce only peramine, the peramine synthetase gene is not localized in a gene cluster, in contrast to Metarhizium species that contain additional pyrrolopyrazine biosynthesis genes. The 2-oxoglutarate-Fe(II) type oxidoreductase ppzC hydroxylates peramine to yield the newly identified compound 8-hydroxyperamine whereas ppzD converts L-proline into trans-4-hydroxy-L-proline, a precursor of peramine biosynthesis. This Metarhizium majus (strain ARSEF 297) protein is Sulfotransferase ppzF.